A 348-amino-acid chain; its full sequence is tRNA N6-adenosine threonylcarbamoyltransferase (348 aa).

Residues H111 and H115 each coordinate Fe cation. Substrate contacts are provided by residues 134–138, D167, G180, D184, and N280; that span reads LVSGG. Position 308 (D308) interacts with Fe cation.

It belongs to the KAE1 / TsaD family. The cofactor is Fe(2+).

It is found in the cytoplasm. It catalyses the reaction L-threonylcarbamoyladenylate + adenosine(37) in tRNA = N(6)-L-threonylcarbamoyladenosine(37) in tRNA + AMP + H(+). Required for the formation of a threonylcarbamoyl group on adenosine at position 37 (t(6)A37) in tRNAs that read codons beginning with adenine. Is involved in the transfer of the threonylcarbamoyl moiety of threonylcarbamoyl-AMP (TC-AMP) to the N6 group of A37, together with TsaE and TsaB. TsaD likely plays a direct catalytic role in this reaction. The protein is tRNA N6-adenosine threonylcarbamoyltransferase of Rippkaea orientalis (strain PCC 8801 / RF-1) (Cyanothece sp. (strain PCC 8801)).